We begin with the raw amino-acid sequence, 320 residues long: tRNA (guanine(10)-N2)-dimethyltransferase (320 aa).

Positions 46–136 (EKFFERLAYT…DDKCYVGLLE (91 aa)) constitute a THUMP domain.

It belongs to the methyltransferase superfamily. Trm-G10 family. As to quaternary structure, monomer.

The protein resides in the cytoplasm. It carries out the reaction guanosine(10) in tRNA + 2 S-adenosyl-L-methionine = N(2)-dimethylguanosine(10) in tRNA + 2 S-adenosyl-L-homocysteine + 2 H(+). Catalyzes the adenosylmethionine-dependent methylation of the exocyclic amino group (N(2)) of guanosine at position 10 of various tRNAs. Acts via a two-step process that leads to the formation of either N(2)-monomethyl (m(2)G) or N(2)-dimethylguanosine (m(2)(2)G). The protein is tRNA (guanine(10)-N2)-dimethyltransferase (trmG10) of Archaeoglobus fulgidus (strain ATCC 49558 / DSM 4304 / JCM 9628 / NBRC 100126 / VC-16).